We begin with the raw amino-acid sequence, 493 residues long: Glutamyl-tRNA(Gln) amidotransferase subunit A (493 aa).

Catalysis depends on charge relay system residues lysine 79 and serine 159. The active-site Acyl-ester intermediate is the serine 183.

It belongs to the amidase family. GatA subfamily. In terms of assembly, heterotrimer of A, B and C subunits.

The enzyme catalyses L-glutamyl-tRNA(Gln) + L-glutamine + ATP + H2O = L-glutaminyl-tRNA(Gln) + L-glutamate + ADP + phosphate + H(+). Allows the formation of correctly charged Gln-tRNA(Gln) through the transamidation of misacylated Glu-tRNA(Gln) in organisms which lack glutaminyl-tRNA synthetase. The reaction takes place in the presence of glutamine and ATP through an activated gamma-phospho-Glu-tRNA(Gln). The protein is Glutamyl-tRNA(Gln) amidotransferase subunit A of Sinorhizobium medicae (strain WSM419) (Ensifer medicae).